Here is a 556-residue protein sequence, read N- to C-terminus: Dihydroxy-acid dehydratase (556 aa).

Asp-78 is a binding site for Mg(2+). Residue Cys-119 coordinates [2Fe-2S] cluster. 2 residues coordinate Mg(2+): Asp-120 and Lys-121. At Lys-121 the chain carries N6-carboxylysine. Cys-191 serves as a coordination point for [2Fe-2S] cluster. Mg(2+) is bound at residue Glu-442. The Proton acceptor role is filled by Ser-468.

Belongs to the IlvD/Edd family. In terms of assembly, homodimer. Requires [2Fe-2S] cluster as cofactor. Mg(2+) is required as a cofactor.

The catalysed reaction is (2R)-2,3-dihydroxy-3-methylbutanoate = 3-methyl-2-oxobutanoate + H2O. The enzyme catalyses (2R,3R)-2,3-dihydroxy-3-methylpentanoate = (S)-3-methyl-2-oxopentanoate + H2O. It participates in amino-acid biosynthesis; L-isoleucine biosynthesis; L-isoleucine from 2-oxobutanoate: step 3/4. It functions in the pathway amino-acid biosynthesis; L-valine biosynthesis; L-valine from pyruvate: step 3/4. Functionally, functions in the biosynthesis of branched-chain amino acids. Catalyzes the dehydration of (2R,3R)-2,3-dihydroxy-3-methylpentanoate (2,3-dihydroxy-3-methylvalerate) into 2-oxo-3-methylpentanoate (2-oxo-3-methylvalerate) and of (2R)-2,3-dihydroxy-3-methylbutanoate (2,3-dihydroxyisovalerate) into 2-oxo-3-methylbutanoate (2-oxoisovalerate), the penultimate precursor to L-isoleucine and L-valine, respectively. The protein is Dihydroxy-acid dehydratase of Clostridium beijerinckii (strain ATCC 51743 / NCIMB 8052) (Clostridium acetobutylicum).